The primary structure comprises 275 residues: Protein CIMAP1C (275 aa).

STPGR repeat units follow at residues proline 200–arginine 225 and proline 236–lysine 261.

Belongs to the CIMAP family.

The protein is Protein CIMAP1C (CIMAP1C) of Mus musculus (Mouse).